Here is a 274-residue protein sequence, read N- to C-terminus: Exosome complex component Rrp42 (274 aa).

The protein belongs to the RNase PH family. Rrp42 subfamily. In terms of assembly, component of the archaeal exosome complex. Forms a hexameric ring-like arrangement composed of 3 Rrp41-Rrp42 heterodimers. The hexameric ring associates with a trimer of Rrp4 and/or Csl4 subunits.

Its subcellular location is the cytoplasm. Non-catalytic component of the exosome, which is a complex involved in RNA degradation. Contributes to the structuring of the Rrp41 active site. This Pyrobaculum aerophilum (strain ATCC 51768 / DSM 7523 / JCM 9630 / CIP 104966 / NBRC 100827 / IM2) protein is Exosome complex component Rrp42.